A 149-amino-acid chain; its full sequence is Calmodulin (149 aa).

N-acetylalanine is present on alanine 2. 4 consecutive EF-hand domains span residues 8-43, 44-79, 81-116, and 117-149; these read EQIAEFKEAFSLFDKDGDGCITTKELGTVMRSLGQN, PTEAELQDMINEVDADGNGTIDFPEFLNLMARKMKD, DSEEELKEAFRVFDKDQDGFISAAELRHVMTNLGEK, and LTDEEVDEMIREADVDGDGQINYEEFVKVMMAK. Ca(2+) is bound by residues aspartate 21, aspartate 23, aspartate 25, cysteine 27, glutamate 32, aspartate 57, aspartate 59, asparagine 61, threonine 63, glutamate 68, aspartate 94, aspartate 96, aspartate 98, and glutamate 105. Lysine 116 bears the N6,N6,N6-trimethyllysine mark. Residues aspartate 130, aspartate 132, aspartate 134, glutamine 136, and glutamate 141 each contribute to the Ca(2+) site.

Belongs to the calmodulin family.

Functionally, calmodulin mediates the control of a large number of enzymes, ion channels and other proteins by Ca(2+). Among the enzymes to be stimulated by the calmodulin-Ca(2+) complex are a number of protein kinases and phosphatases. The protein is Calmodulin of Triticum aestivum (Wheat).